We begin with the raw amino-acid sequence, 180 residues long: V-type proton ATPase subunit c''1 (180 aa).

The Lumenal portion of the chain corresponds to 1 to 26 (MSGVVALGHASSWGAALVRISPYTFS). Residues 27-47 (AIGIAISIGVSVLGAAWGIYI) form a helical membrane-spanning segment. The Cytoplasmic portion of the chain corresponds to 48–66 (TGSSLIGAAIEAPRITSKN). The chain crosses the membrane as a helical span at residues 67–87 (LISVIFCEAVAIYGVIVAIIL). Residues 88-110 (QTKLESVPSSKMYDAESLRAGYA) lie on the Lumenal side of the membrane. A helical transmembrane segment spans residues 111 to 131 (IFASGIIVGFANLVCGLCVGI). The Cytoplasmic segment spans residues 132 to 149 (IGSSCALSDAQNSTLFVK). A helical transmembrane segment spans residues 150-170 (ILVIEIFGSALGLFGVIVGII). Topologically, residues 171–180 (MSAQATWPTK) are lumenal.

The protein belongs to the V-ATPase proteolipid subunit family. As to quaternary structure, V-ATPase is a heteromultimeric enzyme composed of a peripheral catalytic V1 complex (components A to H) attached to an integral membrane V0 proton pore complex (components: a, c, c'', d and e). The proteolipid components c and c'' are present as a hexameric ring that forms the proton-conducting pore. As to expression, preferentially expressed in roots.

It localises to the endoplasmic reticulum membrane. The protein localises to the golgi apparatus membrane. Functionally, proton-conducting pore forming subunit of the membrane integral V0 complex of vacuolar ATPase. V-ATPase is responsible for acidifying a variety of intracellular compartments in eukaryotic cells. This chain is V-type proton ATPase subunit c''1 (VHA-c''1), found in Arabidopsis thaliana (Mouse-ear cress).